A 395-amino-acid polypeptide reads, in one-letter code: Elongation factor Tu (395 aa).

In terms of domain architecture, tr-type G spans 10 to 204; it reads KPHVNVGTIG…AVDNWVPLPE (195 aa). Residues 19 to 26 form a G1 region; it reads GHVDHGKT. 19–26 provides a ligand contact to GTP; the sequence is GHVDHGKT. Mg(2+) is bound at residue T26. The segment at 60–64 is G2; that stretch reads GITIN. The segment at 81 to 84 is G3; sequence DCPG. GTP contacts are provided by residues 81-85 and 136-139; these read DCPGH and NKCD. A G4 region spans residues 136–139; that stretch reads NKCD. The interval 174–176 is G5; that stretch reads SAL.

The protein belongs to the TRAFAC class translation factor GTPase superfamily. Classic translation factor GTPase family. EF-Tu/EF-1A subfamily. As to quaternary structure, monomer.

It is found in the cytoplasm. The catalysed reaction is GTP + H2O = GDP + phosphate + H(+). GTP hydrolase that promotes the GTP-dependent binding of aminoacyl-tRNA to the A-site of ribosomes during protein biosynthesis. This chain is Elongation factor Tu, found in Porphyromonas gingivalis (strain ATCC 33277 / DSM 20709 / CIP 103683 / JCM 12257 / NCTC 11834 / 2561).